The primary structure comprises 266 residues: rRNA adenine N-6-methyltransferase (266 aa).

S-adenosyl-L-methionine contacts are provided by H14, T16, G41, E62, D87, and N103.

This sequence belongs to the class I-like SAM-binding methyltransferase superfamily. rRNA adenine N(6)-methyltransferase family.

Involved in erythromycin resistance. The polypeptide is rRNA adenine N-6-methyltransferase (ermF) (Bacteroides fragilis).